The following is a 254-amino-acid chain: Mamu class II histocompatibility antigen, DR alpha chain (254 aa).

The first 25 residues, 1-25 (MAESGVPVLGFFIIAVLMSAQESWA), serve as a signal peptide directing secretion. The alpha-1 stretch occupies residues 26-109 (IKEEHVIIQA…KRSNNTPITN (84 aa)). Over 26–216 (IKEEHVIIQA…APSPLPETTE (191 aa)) the chain is Extracellular. N103 carries an N-linked (GlcNAc...) asparagine glycan. The segment at 110–203 (VPPEVTVLTN…CLDAPLLKHW (94 aa)) is alpha-2. Positions 112–204 (PEVTVLTNSP…LDAPLLKHWE (93 aa)) constitute an Ig-like C1-type domain. Cysteines 132 and 188 form a disulfide. Residues 204–216 (EFDAPSPLPETTE) are connecting peptide. Residues 217–239 (NVVCALGLIVGLVGIIVGTVFII) traverse the membrane as a helical segment. Topologically, residues 240-254 (KGVRKSNAAERRGPL) are cytoplasmic. Residue K244 forms a Glycyl lysine isopeptide (Lys-Gly) (interchain with G-Cter in ubiquitin) linkage.

It belongs to the MHC class II family. As to quaternary structure, heterodimer of an alpha chain and a beta chain.

It localises to the membrane. This is Mamu class II histocompatibility antigen, DR alpha chain (Mamu-DRA) from Macaca mulatta (Rhesus macaque).